The following is a 228-amino-acid chain: Heptaprenylglyceryl phosphate synthase (228 aa).

Lys12 provides a ligand contact to sn-glycerol 1-phosphate. Residues Asp14 and Ser40 each contribute to the Mg(2+) site. Sn-glycerol 1-phosphate-binding positions include 158 to 163, Gly188, and 208 to 209; these read YLEYSG and GN.

The protein belongs to the GGGP/HepGP synthase family. Group I subfamily. As to quaternary structure, homodimer. The cofactor is Mg(2+).

It carries out the reaction sn-glycerol 1-phosphate + all-trans-heptaprenyl diphosphate = 3-heptaprenyl-sn-glycero-1-phosphate + diphosphate. It participates in membrane lipid metabolism; glycerophospholipid metabolism. Its function is as follows. Prenyltransferase that catalyzes in vivo the transfer of the heptaprenyl moiety of heptaprenyl pyrophosphate (HepPP; 35 carbon atoms) to the C3 hydroxyl of sn-glycerol-1-phosphate (G1P), producing heptaprenylglyceryl phosphate (HepGP). This reaction is an ether-bond-formation step in the biosynthesis of archaea-type G1P-based membrane lipids found in Bacillales. To a much lesser extent, is also able to use geranyl diphosphate (GPP; C10) and geranylgeranyl diphosphate (GGPP; C20) as the prenyl donors, but not farnesyl pyrophosphate (FPP; C15). Cannot use glycerol-3-phosphate (G3P) or 3-phosphoglycerate (3PG) as an acceptor. This is Heptaprenylglyceryl phosphate synthase from Bacillus subtilis (strain 168).